The chain runs to 128 residues: Large ribosomal subunit protein uL22 (128 aa).

It belongs to the universal ribosomal protein uL22 family. As to quaternary structure, part of the 50S ribosomal subunit.

Its function is as follows. This protein binds specifically to 23S rRNA; its binding is stimulated by other ribosomal proteins, e.g. L4, L17, and L20. It is important during the early stages of 50S assembly. It makes multiple contacts with different domains of the 23S rRNA in the assembled 50S subunit and ribosome. In terms of biological role, the globular domain of the protein is located near the polypeptide exit tunnel on the outside of the subunit, while an extended beta-hairpin is found that lines the wall of the exit tunnel in the center of the 70S ribosome. This chain is Large ribosomal subunit protein uL22, found in Prochlorococcus marinus (strain AS9601).